We begin with the raw amino-acid sequence, 382 residues long: Cytochrome c biogenesis CcmF N-terminal-like mitochondrial protein 1 (382 aa).

The next 4 helical transmembrane spans lie at 1–21 (MSIS…FVAF), 30–50 (AFGA…LLFC), 79–99 (HEGS…FFCY), and 117–137 (SLFF…LLRY).

The protein belongs to the CcmF/CycK/Ccl1/NrfE/CcsA family. As to quaternary structure, interacts with CCMFN2 and CCMH.

The protein localises to the mitochondrion inner membrane. In terms of biological role, forms a complex with CCMFC, CCMFN2 and CCMH that performs the assembly of heme with c-type apocytochromes in mitochondria. This is Cytochrome c biogenesis CcmF N-terminal-like mitochondrial protein 1 from Arabidopsis thaliana (Mouse-ear cress).